Here is a 291-residue protein sequence, read N- to C-terminus: 4-hydroxy-tetrahydrodipicolinate synthase (291 aa).

Thr-44 contacts pyruvate. Tyr-132 acts as the Proton donor/acceptor in catalysis. Lys-161 functions as the Schiff-base intermediate with substrate in the catalytic mechanism. Position 202 (Ile-202) interacts with pyruvate.

Belongs to the DapA family. In terms of assembly, homotetramer; dimer of dimers.

The protein localises to the cytoplasm. The enzyme catalyses L-aspartate 4-semialdehyde + pyruvate = (2S,4S)-4-hydroxy-2,3,4,5-tetrahydrodipicolinate + H2O + H(+). It functions in the pathway amino-acid biosynthesis; L-lysine biosynthesis via DAP pathway; (S)-tetrahydrodipicolinate from L-aspartate: step 3/4. In terms of biological role, catalyzes the condensation of (S)-aspartate-beta-semialdehyde [(S)-ASA] and pyruvate to 4-hydroxy-tetrahydrodipicolinate (HTPA). The polypeptide is 4-hydroxy-tetrahydrodipicolinate synthase (Endomicrobium trichonymphae).